An 885-amino-acid chain; its full sequence is Aconitate hydratase A (885 aa).

[4Fe-4S] cluster-binding residues include cysteine 425, cysteine 491, and cysteine 494.

The protein belongs to the aconitase/IPM isomerase family. Monomer. The cofactor is [4Fe-4S] cluster.

It catalyses the reaction citrate = D-threo-isocitrate. It carries out the reaction (2S,3R)-3-hydroxybutane-1,2,3-tricarboxylate = 2-methyl-cis-aconitate + H2O. It functions in the pathway carbohydrate metabolism; tricarboxylic acid cycle; isocitrate from oxaloacetate: step 2/2. It participates in organic acid metabolism; propanoate degradation. In terms of biological role, involved in the catabolism of short chain fatty acids (SCFA) via the tricarboxylic acid (TCA)(acetyl degradation route) and probably the 2-methylcitrate cycle I (propionate degradation route). Catalyzes the reversible isomerization of citrate to isocitrate via cis-aconitate. Could catalyze the hydration of 2-methyl-cis-aconitate to yield (2R,3S)-2-methylisocitrate. The apo form of AcnA functions as a RNA-binding regulatory protein. The chain is Aconitate hydratase A (acnA) from Rickettsia bellii (strain RML369-C).